A 148-amino-acid chain; its full sequence is Large ribosomal subunit protein bL9 (148 aa).

It belongs to the bacterial ribosomal protein bL9 family.

Its function is as follows. Binds to the 23S rRNA. The sequence is that of Large ribosomal subunit protein bL9 from Ruminiclostridium cellulolyticum (strain ATCC 35319 / DSM 5812 / JCM 6584 / H10) (Clostridium cellulolyticum).